Here is a 331-residue protein sequence, read N- to C-terminus: Ornithine carbamoyltransferase (331 aa).

Residues 55–58, Gln82, Arg106, and 133–136 contribute to the carbamoyl phosphate site; these read STRT and HPTQ. L-ornithine-binding positions include Asn166, Asp230, and 234–235; that span reads SM. Carbamoyl phosphate-binding positions include 272–273 and Arg317; that span reads CL.

Belongs to the aspartate/ornithine carbamoyltransferase superfamily. OTCase family.

The protein localises to the cytoplasm. It carries out the reaction carbamoyl phosphate + L-ornithine = L-citrulline + phosphate + H(+). Its pathway is amino-acid biosynthesis; L-arginine biosynthesis; L-arginine from L-ornithine and carbamoyl phosphate: step 1/3. In terms of biological role, reversibly catalyzes the transfer of the carbamoyl group from carbamoyl phosphate (CP) to the N(epsilon) atom of ornithine (ORN) to produce L-citrulline. The polypeptide is Ornithine carbamoyltransferase (Neisseria gonorrhoeae (strain ATCC 700825 / FA 1090)).